Consider the following 153-residue polypeptide: UPF0756 membrane protein Lm4b_01579 (153 aa).

4 helical membrane passes run 6–26 (MLFL…SLII), 54–74 (WGVT…QIGF), 80–100 (SFKS…SILA), and 117–137 (LVFG…GPVI).

This sequence belongs to the UPF0756 family.

The protein resides in the cell membrane. The sequence is that of UPF0756 membrane protein Lm4b_01579 from Listeria monocytogenes serotype 4b (strain CLIP80459).